The primary structure comprises 332 residues: L-lactate dehydrogenase A chain (332 aa).

NAD(+) contacts are provided by residues 29–57 and R99; that span reads GAVGMACAISILMKDLADELTLVDVVEDK. Residues R106, N138, and R169 each contribute to the substrate site. NAD(+) is bound at residue N138. H193 functions as the Proton acceptor in the catalytic mechanism. T248 is a binding site for substrate.

It belongs to the LDH/MDH superfamily. LDH family. Homotetramer.

It localises to the cytoplasm. The catalysed reaction is (S)-lactate + NAD(+) = pyruvate + NADH + H(+). It functions in the pathway fermentation; pyruvate fermentation to lactate; (S)-lactate from pyruvate: step 1/1. In terms of biological role, interconverts simultaneously and stereospecifically pyruvate and lactate with concomitant interconversion of NADH and NAD(+). The sequence is that of L-lactate dehydrogenase A chain (LDHA) from Gallus gallus (Chicken).